Here is a 95-residue protein sequence, read N- to C-terminus: Small ribosomal subunit protein bS6 (95 aa).

The protein belongs to the bacterial ribosomal protein bS6 family.

Binds together with bS18 to 16S ribosomal RNA. The polypeptide is Small ribosomal subunit protein bS6 (Onion yellows phytoplasma (strain OY-M)).